A 487-amino-acid chain; its full sequence is Betaine aldehyde dehydrogenase (487 aa).

K(+)-binding residues include Ile27 and Asp93. 149–151 (GAW) contributes to the NAD(+) binding site. The active-site Charge relay system is the Lys161. Residues 175 to 178 (KPSE) and 228 to 231 (SVPT) contribute to the NAD(+) site. Leu243 contacts K(+). Glu249 serves as the catalytic Proton acceptor. Residues Gly251, Cys283, and Glu384 each coordinate NAD(+). The active-site Nucleophile is the Cys283. The residue at position 283 (Cys283) is a Cysteine sulfenic acid (-SOH). K(+)-binding residues include Lys454 and Gly457. The Charge relay system role is filled by Glu461.

This sequence belongs to the aldehyde dehydrogenase family. As to quaternary structure, dimer of dimers. K(+) serves as cofactor.

It carries out the reaction betaine aldehyde + NAD(+) + H2O = glycine betaine + NADH + 2 H(+). It functions in the pathway amine and polyamine biosynthesis; betaine biosynthesis via choline pathway; betaine from betaine aldehyde: step 1/1. Involved in the biosynthesis of the osmoprotectant glycine betaine. Catalyzes the irreversible oxidation of betaine aldehyde to the corresponding acid. The chain is Betaine aldehyde dehydrogenase from Brucella melitensis biotype 2 (strain ATCC 23457).